Here is a 349-residue protein sequence, read N- to C-terminus: Thiamine-phosphate synthase (349 aa).

A unknown region spans residues 1 to 125 (MGCESSLDPR…SAEAAAIRYG (125 aa)). Residues 63–85 (RARSTVTDPGAGMEHPAQLDRHS) are disordered. The thiamine-phosphate synthase stretch occupies residues 126–349 (LYDLEVTCLT…LLSSLSRPTL (224 aa)). 4-amino-2-methyl-5-(diphosphooxymethyl)pyrimidine contacts are provided by residues 177–181 (QHRCK) and asparagine 209. Mg(2+) is bound by residues aspartate 210 and aspartate 229. 2 residues coordinate 4-amino-2-methyl-5-(diphosphooxymethyl)pyrimidine: serine 248 and lysine 277. Glycine 304 contacts 2-[(2R,5Z)-2-carboxy-4-methylthiazol-5(2H)-ylidene]ethyl phosphate.

The protein belongs to the thiamine-phosphate synthase family. Mg(2+) is required as a cofactor.

The enzyme catalyses 2-[(2R,5Z)-2-carboxy-4-methylthiazol-5(2H)-ylidene]ethyl phosphate + 4-amino-2-methyl-5-(diphosphooxymethyl)pyrimidine + 2 H(+) = thiamine phosphate + CO2 + diphosphate. It carries out the reaction 2-(2-carboxy-4-methylthiazol-5-yl)ethyl phosphate + 4-amino-2-methyl-5-(diphosphooxymethyl)pyrimidine + 2 H(+) = thiamine phosphate + CO2 + diphosphate. It catalyses the reaction 4-methyl-5-(2-phosphooxyethyl)-thiazole + 4-amino-2-methyl-5-(diphosphooxymethyl)pyrimidine + H(+) = thiamine phosphate + diphosphate. It functions in the pathway cofactor biosynthesis; thiamine diphosphate biosynthesis; thiamine phosphate from 4-amino-2-methyl-5-diphosphomethylpyrimidine and 4-methyl-5-(2-phosphoethyl)-thiazole: step 1/1. Functionally, condenses 4-methyl-5-(beta-hydroxyethyl)thiazole monophosphate (THZ-P) and 2-methyl-4-amino-5-hydroxymethyl pyrimidine pyrophosphate (HMP-PP) to form thiamine monophosphate (TMP). This is Thiamine-phosphate synthase from Parasynechococcus marenigrum (strain WH8102).